The sequence spans 1170 residues: Disease resistance protein LAZ5 (1170 aa).

In terms of domain architecture, TIR spans 10–172; sequence ESWQVFINFR…KIIDSIKKVL (163 aa). The active site involves glutamate 84. The segment at 193-219 is disordered; the sequence is EAKNVDTFSPNSSDFPSTSIDDDLSIN. Over residues 198–219 the composition is skewed to polar residues; it reads DTFSPNSSDFPSTSIDDDLSIN. Residues 261–513 form the NB-ARC domain; the sequence is RLKEMEEKLD…DVACFFKSEN (253 aa). LRR repeat units follow at residues 595-616, 622-645, 646-670, 677-700, 723-747, 761-785, 790-813, 815-837, 838-861, 862-885, 888-904, and 905-930; these read MENV…TFDG, MCNL…IFKF, DTVR…PWEK, PENL…VKDT, AKNL…MENM, LTCL…KLEE, SENL…AGDL, RLVV…LGKQ, KALQ…VKDM, KHLR…SLKC, LSRN…LKDF, and SNLK…CLEY.

It carries out the reaction NAD(+) + H2O = ADP-D-ribose + nicotinamide + H(+). In terms of biological role, TIR-NB-LRR receptor-like protein that may play a role in plant innate immunity. May trigger hypersensitive programmed cell death in response to pathogen attack. Involved in tolerance to tobacco ringspot virus (TRSV). The sequence is that of Disease resistance protein LAZ5 from Arabidopsis thaliana (Mouse-ear cress).